The following is a 401-amino-acid chain: Transcription factor atf-2 (401 aa).

Positions 19 to 38 (SASAEFSSSSSDSSNFSEGS) are enriched in low complexity. The tract at residues 19-78 (SASAEFSSSSSDSSNFSEGSPPESRRNSVNESVIKDEHYWERRRRNNDASRRSREKRRQN) is disordered. The segment covering 41 to 78 (ESRRNSVNESVIKDEHYWERRRRNNDASRRSREKRRQN) has biased composition (basic and acidic residues). One can recognise a bZIP 1 domain in the interval 54-100 (DEHYWERRRRNNDASRRSREKRRQNDLAMEEKIMLLSAENERLKSQL). Residues 60–85 (RRRRNNDASRRSREKRRQNDLAMEEK) form a basic motif 1 region. Residues 89–96 (LSAENERL) are leucine-zipper 1. Residues 181–211 (SASSLFSSSSSSAFHPFRPSESAQQSFPSSS) show a composition bias toward low complexity. Disordered stretches follow at residues 181–256 (SASS…PQPV) and 273–345 (QRRP…AAKR). 2 stretches are compositionally biased toward polar residues: residues 222–256 (DSST…PQPV) and 273–283 (QRRPSPTVPQS). Residues 305 to 317 (ESVSSSASFSPSH) show a composition bias toward low complexity. One can recognise a bZIP 2 domain in the interval 329 to 392 (SPQYVDRRRR…AHFKSVLAQR (64 aa)). Residues 335 to 360 (RRRRNNEAAKRCRANRRAVFEYRSRR) are basic motif 2. Residues 361–388 (VQLLEGENEDLRTQIETLKAEIAHFKSV) are a coiled coil. The tract at residues 364–378 (LEGENEDLRTQIETL) is leucine-zipper 2.

It belongs to the bZIP family. Interacts with cell death specification protein ces-2. Post-translationally, phosphorylated by mitogen-activated protein kinases pmk-2 and pmk-3. May be responsive to osmotic stress.

The protein resides in the nucleus. Its function is as follows. Acts as a transcription factor that recognizes and binds to the sequence 5'-[GA]TTA[CT]GTAA[CT]-3', a sequence present in many promoters. Involved in the development of the excretory duct cell, by positively modulating embryonic transcription of putative transcription factor lin-48, acting in concert with cell death specification protein ces-2. Negatively modulates expression of key autophagy-related genes, bec-1/ATG6 and lgg-1/ATG8, and may link together autophagy and apoptosis during development. Positively modulates expression of neuropeptide pigment dispersing factor homologs pdf-1 and pdf-2. The polypeptide is Transcription factor atf-2 (Caenorhabditis elegans).